The following is a 37-amino-acid chain: MKIRASVRKICEKCRLIRRRGRIIVICSNPKHKQRQG.

The protein belongs to the bacterial ribosomal protein bL36 family.

The protein resides in the plastid. Its subcellular location is the chloroplast. The protein is Large ribosomal subunit protein bL36c of Mesembryanthemum crystallinum (Common ice plant).